The primary structure comprises 292 residues: 4-hydroxy-tetrahydrodipicolinate synthase (292 aa).

Residue threonine 45 participates in pyruvate binding. The active-site Proton donor/acceptor is tyrosine 133. The active-site Schiff-base intermediate with substrate is lysine 161. Isoleucine 203 is a pyruvate binding site.

This sequence belongs to the DapA family. In terms of assembly, homotetramer; dimer of dimers.

The protein localises to the cytoplasm. The catalysed reaction is L-aspartate 4-semialdehyde + pyruvate = (2S,4S)-4-hydroxy-2,3,4,5-tetrahydrodipicolinate + H2O + H(+). It participates in amino-acid biosynthesis; L-lysine biosynthesis via DAP pathway; (S)-tetrahydrodipicolinate from L-aspartate: step 3/4. Catalyzes the condensation of (S)-aspartate-beta-semialdehyde [(S)-ASA] and pyruvate to 4-hydroxy-tetrahydrodipicolinate (HTPA). The polypeptide is 4-hydroxy-tetrahydrodipicolinate synthase (Shigella dysenteriae serotype 1 (strain Sd197)).